The chain runs to 946 residues: Glycine dehydrogenase (decarboxylating) (946 aa).

The residue at position 700 (K700) is an N6-(pyridoxal phosphate)lysine.

It belongs to the GcvP family. The glycine cleavage system is composed of four proteins: P, T, L and H. Pyridoxal 5'-phosphate is required as a cofactor.

It carries out the reaction N(6)-[(R)-lipoyl]-L-lysyl-[glycine-cleavage complex H protein] + glycine + H(+) = N(6)-[(R)-S(8)-aminomethyldihydrolipoyl]-L-lysyl-[glycine-cleavage complex H protein] + CO2. The glycine cleavage system catalyzes the degradation of glycine. The P protein binds the alpha-amino group of glycine through its pyridoxal phosphate cofactor; CO(2) is released and the remaining methylamine moiety is then transferred to the lipoamide cofactor of the H protein. The polypeptide is Glycine dehydrogenase (decarboxylating) (Pseudomonas fluorescens (strain SBW25)).